We begin with the raw amino-acid sequence, 98 residues long: Small ribosomal subunit protein uS19 (98 aa).

The interval 77 to 98 (TRTYRGHAGGKAEKGGAAPKRK) is disordered.

This sequence belongs to the universal ribosomal protein uS19 family.

In terms of biological role, protein S19 forms a complex with S13 that binds strongly to the 16S ribosomal RNA. This chain is Small ribosomal subunit protein uS19, found in Chlorobium phaeovibrioides (strain DSM 265 / 1930) (Prosthecochloris vibrioformis (strain DSM 265)).